The chain runs to 161 residues: Nucleotide-binding protein XCV3791 (161 aa).

It belongs to the YajQ family.

Nucleotide-binding protein. The protein is Nucleotide-binding protein XCV3791 of Xanthomonas euvesicatoria pv. vesicatoria (strain 85-10) (Xanthomonas campestris pv. vesicatoria).